The chain runs to 95 residues: Large ribosomal subunit protein uL23 (95 aa).

It belongs to the universal ribosomal protein uL23 family. In terms of assembly, part of the 50S ribosomal subunit. Contacts protein L29, and trigger factor when it is bound to the ribosome.

Functionally, one of the early assembly proteins it binds 23S rRNA. One of the proteins that surrounds the polypeptide exit tunnel on the outside of the ribosome. Forms the main docking site for trigger factor binding to the ribosome. The chain is Large ribosomal subunit protein uL23 from Desulforamulus reducens (strain ATCC BAA-1160 / DSM 100696 / MI-1) (Desulfotomaculum reducens).